The chain runs to 212 residues: MAISDMRRQYSKGSLSESDITSSPFSLFDQWLKDAIDAGIPDPTAMTVATVDSTGQPSQRIVLLKDVSDKGFVFFTNLGSRKAQELSVNPKVSCHFPWFFMERQVRVCGSVEKLSVSENAAYFFSRPKDSQLAAYASKQSKPIGSRALLLTQFKQLKDKFANKALPVPDFWGGFRIVPHQIEFWQGGEDRLHDRLEYNKAEDGRWSTQRLMP.

Substrate is bound by residues 7 to 10 and K65; that span reads RRQY. Residues 60–65, 75–76, R81, K82, and Q104 each bind FMN; these read RIVLLK and FT. Y122, R126, and S130 together coordinate substrate. FMN contacts are provided by residues 139–140 and W184; that span reads QS. 190-192 lines the substrate pocket; sequence RLH. R194 lines the FMN pocket.

The protein belongs to the pyridoxamine 5'-phosphate oxidase family. In terms of assembly, homodimer. FMN is required as a cofactor.

It carries out the reaction pyridoxamine 5'-phosphate + O2 + H2O = pyridoxal 5'-phosphate + H2O2 + NH4(+). The catalysed reaction is pyridoxine 5'-phosphate + O2 = pyridoxal 5'-phosphate + H2O2. It functions in the pathway cofactor metabolism; pyridoxal 5'-phosphate salvage; pyridoxal 5'-phosphate from pyridoxamine 5'-phosphate: step 1/1. Its pathway is cofactor metabolism; pyridoxal 5'-phosphate salvage; pyridoxal 5'-phosphate from pyridoxine 5'-phosphate: step 1/1. Its function is as follows. Catalyzes the oxidation of either pyridoxine 5'-phosphate (PNP) or pyridoxamine 5'-phosphate (PMP) into pyridoxal 5'-phosphate (PLP). The sequence is that of Pyridoxine/pyridoxamine 5'-phosphate oxidase from Alteromonas mediterranea (strain DSM 17117 / CIP 110805 / LMG 28347 / Deep ecotype).